The chain runs to 480 residues: MSPQTETKAFVGFKAGVKDYKLNYYTPQYQPLDTDILAAFRVTPQPGVPSEEAGAAVAAESSTGTWTTVWTDGLTSLDRYKGRCYHIDPVPGEDNQYICYVAYPLDLFEEGSVTNMFTSIVGNVFGFKALRALRLEDLRIPVAYIKTFQGPPHGIQVERDKLNKYGRAILGCTIKPKLGLSAKNYGRAVYECLRGGLDFTKDDENVNSQPFMRWRDRFLFCAEALYKAQAETGEIKGHYLNATAGTCEEMIKRAVFARELGAPIVMHDYLTGGFTANTSLAHYCRDNGLLLHIHRAMHAVIDRQKNHGMHFRVLAKALRLSGGDHIHAGTVVGKLEGERDITLGFVDLLRDDYIEIDDDRGIYFTQPWVSTPGVLPVASGGIHVWHMPALTEIFGDDSVLQFGGGTLGHPWGNAPGAVANRVALEACVQARNEGRDLAREGATIIREAAKWSPELAAACEVWKEIKFEFPAVDTLDKKKG.

Positions 1 to 2 (MS) are excised as a propeptide. Pro3 carries the N-acetylproline modification. Lys14 bears the N6,N6,N6-trimethyllysine mark. 2 residues coordinate substrate: Asn123 and Thr173. The Proton acceptor role is filled by Lys175. Residue Lys177 participates in substrate binding. The Mg(2+) site is built by Lys201, Asp203, and Glu204. Lys201 carries the post-translational modification N6-carboxylysine. The active-site Proton acceptor is the His294. Positions 295, 327, and 379 each coordinate substrate.

It belongs to the RuBisCO large chain family. Type I subfamily. Heterohexadecamer of 8 large chains and 8 small chains; disulfide-linked. The disulfide link is formed within the large subunit homodimers. Mg(2+) serves as cofactor. Post-translationally, the disulfide bond which can form in the large chain dimeric partners within the hexadecamer appears to be associated with oxidative stress and protein turnover.

It localises to the plastid. It is found in the chloroplast. The catalysed reaction is 2 (2R)-3-phosphoglycerate + 2 H(+) = D-ribulose 1,5-bisphosphate + CO2 + H2O. It catalyses the reaction D-ribulose 1,5-bisphosphate + O2 = 2-phosphoglycolate + (2R)-3-phosphoglycerate + 2 H(+). Functionally, ruBisCO catalyzes two reactions: the carboxylation of D-ribulose 1,5-bisphosphate, the primary event in carbon dioxide fixation, as well as the oxidative fragmentation of the pentose substrate in the photorespiration process. Both reactions occur simultaneously and in competition at the same active site. The protein is Ribulose bisphosphate carboxylase large chain of Basella alba (Malabar spinach).